Reading from the N-terminus, the 242-residue chain is 3-dehydroquinate dehydratase (242 aa).

3-dehydroquinate contacts are provided by residues Glu-39–Arg-41 and Arg-73. The Proton donor/acceptor role is filled by His-135. Catalysis depends on Lys-162, which acts as the Schiff-base intermediate with substrate. 2 residues coordinate 3-dehydroquinate: Arg-203 and Gln-228.

It belongs to the type-I 3-dehydroquinase family. As to quaternary structure, homodimer.

The catalysed reaction is 3-dehydroquinate = 3-dehydroshikimate + H2O. Its pathway is metabolic intermediate biosynthesis; chorismate biosynthesis; chorismate from D-erythrose 4-phosphate and phosphoenolpyruvate: step 3/7. Involved in the third step of the chorismate pathway, which leads to the biosynthesis of aromatic amino acids. Catalyzes the cis-dehydration of 3-dehydroquinate (DHQ) and introduces the first double bond of the aromatic ring to yield 3-dehydroshikimate. The chain is 3-dehydroquinate dehydratase from Methanosarcina acetivorans (strain ATCC 35395 / DSM 2834 / JCM 12185 / C2A).